The primary structure comprises 176 residues: Large ribosomal subunit protein bL17m (176 aa).

A mitochondrion-targeting transit peptide spans 1–8; sequence MRLSLAAA.

Belongs to the bacterial ribosomal protein bL17 family. As to quaternary structure, component of the mitochondrial ribosome large subunit (39S) which comprises a 16S rRNA and about 50 distinct proteins.

It localises to the mitochondrion. In Mus musculus (Mouse), this protein is Large ribosomal subunit protein bL17m (Mrpl17).